The chain runs to 151 residues: 3-dehydroquinate dehydratase (151 aa).

The active-site Proton acceptor is the tyrosine 26. Substrate-binding residues include asparagine 77, histidine 83, and aspartate 90. Histidine 103 (proton donor) is an active-site residue. Substrate-binding positions include 104-105 and arginine 114; that span reads LS.

This sequence belongs to the type-II 3-dehydroquinase family. As to quaternary structure, homododecamer.

It catalyses the reaction 3-dehydroquinate = 3-dehydroshikimate + H2O. It functions in the pathway metabolic intermediate biosynthesis; chorismate biosynthesis; chorismate from D-erythrose 4-phosphate and phosphoenolpyruvate: step 3/7. Catalyzes a trans-dehydration via an enolate intermediate. The sequence is that of 3-dehydroquinate dehydratase from Pelodictyon phaeoclathratiforme (strain DSM 5477 / BU-1).